The primary structure comprises 160 residues: Putative pre-16S rRNA nuclease (160 aa).

The protein belongs to the YqgF nuclease family.

The protein localises to the cytoplasm. In terms of biological role, could be a nuclease involved in processing of the 5'-end of pre-16S rRNA. In Cutibacterium acnes (strain DSM 16379 / KPA171202) (Propionibacterium acnes), this protein is Putative pre-16S rRNA nuclease.